Here is a 356-residue protein sequence, read N- to C-terminus: 5-formaminoimidazole-4-carboxamide-1-(beta)-D-ribofuranosyl 5'-monophosphate synthetase 2 (356 aa).

2 residues coordinate 5-amino-1-(5-phospho-beta-D-ribosyl)imidazole-4-carboxamide: histidine 27 and serine 94. Residues 101 to 333 enclose the ATP-grasp domain; sequence RENFTGMAVP…YSDLMQKRLS (233 aa). ATP-binding positions include 145-196 and glutamate 226; that span reads PHDI…TRYD. 5-amino-1-(5-phospho-beta-D-ribosyl)imidazole-4-carboxamide is bound at residue asparagine 255. Glutamate 293 and glutamate 306 together coordinate Mg(2+).

The protein belongs to the phosphohexose mutase family. Mg(2+) is required as a cofactor. Mn(2+) serves as cofactor.

It catalyses the reaction 5-amino-1-(5-phospho-beta-D-ribosyl)imidazole-4-carboxamide + formate + ATP = 5-formamido-1-(5-phospho-D-ribosyl)imidazole-4-carboxamide + ADP + phosphate. It functions in the pathway purine metabolism; IMP biosynthesis via de novo pathway; 5-formamido-1-(5-phospho-D-ribosyl)imidazole-4-carboxamide from 5-amino-1-(5-phospho-D-ribosyl)imidazole-4-carboxamide (formate route): step 1/1. Its function is as follows. Catalyzes the ATP- and formate-dependent formylation of 5-aminoimidazole-4-carboxamide-1-beta-d-ribofuranosyl 5'-monophosphate (AICAR) to 5-formaminoimidazole-4-carboxamide-1-beta-d-ribofuranosyl 5'-monophosphate (FAICAR) in the absence of folates. The protein is 5-formaminoimidazole-4-carboxamide-1-(beta)-D-ribofuranosyl 5'-monophosphate synthetase 2 of Methanosarcina mazei (strain ATCC BAA-159 / DSM 3647 / Goe1 / Go1 / JCM 11833 / OCM 88) (Methanosarcina frisia).